We begin with the raw amino-acid sequence, 452 residues long: MDTATKTGYADVLVGLQYGDEGKARVVDHLAAGYDVIARFNGGANAGHTIATSEGILRLRQVPSGVLHPRVSLYIGSGCVIGLRQLASEIEMLAGQGIDLAGRLTISDRCPVVQPAHFLSDRRDGGRIGTTGNGIGPCYADLAARMRGGERSAFQLCDLMRDESRVFEQMMRLAAQRDDEDIAVLIQEMRQAWQVVRPFVTDNPVALLERVEGGARVLFEGAQSVMLDVVQGAQPWVTSSHTLPSYAYVGGDLPCRYHRKTIGVAKAMVSRVGSGPLPTELGAERSEAYCADAGREGRGRADEAARFDPRALLAQGDAFSTGIAIRMLSNEYGTGTGRPRRVGLLDVAQLQLAIRQFGVDEVYLNKCDSLAVFAQTRDRCIPVVVGSRDGNAMHVMRFPAFDESVIPRDDATPLPPQLETLLEWLADVLGRPLRGIGLGPQRAQMRLFKTQP.

Residues 19–25 and 47–49 contribute to the GTP site; these read GDEGKAR and GHT. D20 serves as the catalytic Proton acceptor. 2 residues coordinate Mg(2+): D20 and G47. Residues 20–23, 45–48, T131, R145, Q223, T238, and R338 contribute to the IMP site; these read DEGK and NAGH. H48 functions as the Proton donor in the catalytic mechanism. 334 to 340 serves as a coordination point for substrate; sequence TGTGRPR. GTP is bound by residues R340, 366–368, and 437–439; these read KCD and GLG.

It belongs to the adenylosuccinate synthetase family. In terms of assembly, homodimer. It depends on Mg(2+) as a cofactor.

The protein localises to the cytoplasm. The catalysed reaction is IMP + L-aspartate + GTP = N(6)-(1,2-dicarboxyethyl)-AMP + GDP + phosphate + 2 H(+). Its pathway is purine metabolism; AMP biosynthesis via de novo pathway; AMP from IMP: step 1/2. Plays an important role in the de novo pathway of purine nucleotide biosynthesis. Catalyzes the first committed step in the biosynthesis of AMP from IMP. This Cupriavidus pinatubonensis (strain JMP 134 / LMG 1197) (Cupriavidus necator (strain JMP 134)) protein is Adenylosuccinate synthetase 2.